Consider the following 288-residue polypeptide: Alpha/beta hydrolase domain-containing protein 17B (288 aa).

Residues Ser-170, Asp-235, and His-264 each act as charge relay system in the active site.

This sequence belongs to the AB hydrolase superfamily. ABHD17 family. In terms of processing, palmitoylated on cysteine residues located in a cysteine cluster at the N-terminus which promotes membrane localization.

The protein resides in the cell membrane. It is found in the recycling endosome membrane. It localises to the cell projection. The protein localises to the dendritic spine. Its subcellular location is the postsynaptic density membrane. The catalysed reaction is S-hexadecanoyl-L-cysteinyl-[protein] + H2O = L-cysteinyl-[protein] + hexadecanoate + H(+). Functionally, hydrolyzes fatty acids from S-acylated cysteine residues in proteins. Has depalmitoylating activity towards NRAS. This is Alpha/beta hydrolase domain-containing protein 17B from Gallus gallus (Chicken).